Reading from the N-terminus, the 201-residue chain is NF-kappa-B inhibitor-interacting Ras-like protein (201 aa).

Positions 3 to 201 (NAKIGKVGKV…VMQNRQKSEA (199 aa)) are small GTPase-like. 16 to 23 (GMKGVGKT) is a binding site for GTP. The Effector region motif lies at 40–48 (LHPTIEDIY). GTP is bound by residues 67-71 (DTAGL) and 127-130 (NVRA).

The protein belongs to the small GTPase superfamily. Ras family. KappaB-Ras subfamily. Interacts with NF-kappa-B inhibitor cactus.

Its function is as follows. Atypical Ras-like protein that may act as a regulator of NF-kappa-B activity, possibly by preventing the degradation of NF-kappa-B inhibitor cactus. This Drosophila melanogaster (Fruit fly) protein is NF-kappa-B inhibitor-interacting Ras-like protein (kappaB-Ras).